A 466-amino-acid chain; its full sequence is Cysteine--tRNA ligase (466 aa).

Cysteine 30 is a Zn(2+) binding site. The 'HIGH' region motif lies at 32-42; sequence PTVYNYIHIGN. Zn(2+) contacts are provided by cysteine 210, histidine 235, and glutamate 239. The short motif at 267-271 is the 'KMSKS' region element; the sequence is KMSKS. Lysine 270 is an ATP binding site. Serine 271 carries the phosphoserine modification.

The protein belongs to the class-I aminoacyl-tRNA synthetase family. In terms of assembly, monomer. It depends on Zn(2+) as a cofactor.

It localises to the cytoplasm. The catalysed reaction is tRNA(Cys) + L-cysteine + ATP = L-cysteinyl-tRNA(Cys) + AMP + diphosphate. The protein is Cysteine--tRNA ligase of Geobacillus sp. (strain WCH70).